Reading from the N-terminus, the 269-residue chain is MPDWLIAIVLGLVEGLTEFIPVSSTGHLLLTKIALGLTDPAWDTFIVLIQLGAVLGVVALYFQRLWAVVVGLPTQPEARRFALTVLIGCIPAFAAGLALHGVIKHFFENPYLPQVICVSLILGGVILLVVDKKAPPPREMDGMALSLKTAALIGLFQCLSLLPGVSRSGSTIVGSMLIGVDRKAAAEFSFFMAIPIMVGAFALDLLKSYKDIDASHAGAIAIGFVVSFLSGLVVVKFLIDFVGKRGFTPFAWWRIVVGVIGLGLIYIPR.

The next 7 helical transmembrane spans lie at 42–62 (WDTF…ALYF), 83–103 (LTVL…HGVI), 110–130 (PYLP…LLVV), 142–162 (GMAL…LSLL), 186–206 (AEFS…LDLL), 219–239 (AIAI…KFLI), and 247–267 (FTPF…LIYI).

This sequence belongs to the UppP family.

It is found in the cell inner membrane. The catalysed reaction is di-trans,octa-cis-undecaprenyl diphosphate + H2O = di-trans,octa-cis-undecaprenyl phosphate + phosphate + H(+). Functionally, catalyzes the dephosphorylation of undecaprenyl diphosphate (UPP). Confers resistance to bacitracin. This is Undecaprenyl-diphosphatase from Caulobacter sp. (strain K31).